The primary structure comprises 429 residues: CinA-like protein (429 aa).

This sequence belongs to the CinA family.

The chain is CinA-like protein from Chlorobium limicola (strain DSM 245 / NBRC 103803 / 6330).